The sequence spans 234 residues: Dienlactone hydrolase 2 (234 aa).

Residues Cys143, Asp167, and His199 contribute to the active site.

Belongs to the dienelactone hydrolase family.

Its pathway is xenobiotic degradation. In terms of biological role, dienlactone hydrolase; part of the Fusarium detoxification of benzoxazolinone cluster 2 (FDB2) involved in the degradation of benzoxazolinones produced by the host plant. Maize, wheat, and rye produce the 2 benzoxazinone phytoanticipins 2,4-dihy-droxy-7-methoxy-1,4-benzoxazin-3-one (DIMBOA) and 2,4-dihydroxy-1,4-benzoxazin-3-one (DIBOA) that, due to their inherent instability once released, spontaneously degrade to the more stable corresponding benzoxazolinones, 6-methoxy-2-benzoxazolinone (MBOA) and 2-benzoxazolinone (BOA), respectively. The first step in the detoxification of benzoxazolinones involves the hydrolysis of the cyclic ester bond of benzoxazolinones by the FDB1 cluster gamma-lactamase MBL1 to aminophenols. MBL1 is able to convert BOA into 2-aminophenol (2-AP), as well as MBOA into 5-methoxy-2-aminophenol (2-AMP). The FDB2 cluster N-malonyltransferase FDB2/NAT1 then metabolizes aminophenols via N-malonylation to non-toxic malonamic acids. FDB2/NAT1 converts 2-AP into N-(2-hydroxyphenyl) malonamic acid (HPMA) and 2-AMP into N-(2-hydroxy-4-methoxyphenyl) malonamic acid (HMPMA). The duplicated dienlactone hydrolases DLH1 and DLH2 may provide redundant function for hydrolyzing the lactone moiety in the BOA molecule. The roles of the amidases and other enzymes encoded by the 2 FDB clusters have not been identified so far. The polypeptide is Dienlactone hydrolase 2 (Gibberella moniliformis (strain M3125 / FGSC 7600) (Maize ear and stalk rot fungus)).